Here is a 682-residue protein sequence, read N- to C-terminus: DNA-directed RNA polymerase subunit beta' (682 aa).

Positions 69, 71, 87, and 90 each coordinate Zn(2+). Residues Asp489, Asp491, and Asp493 each coordinate Mg(2+).

Belongs to the RNA polymerase beta' chain family. RpoC1 subfamily. In terms of assembly, in plastids the minimal PEP RNA polymerase catalytic core is composed of four subunits: alpha, beta, beta', and beta''. When a (nuclear-encoded) sigma factor is associated with the core the holoenzyme is formed, which can initiate transcription. It depends on Mg(2+) as a cofactor. Requires Zn(2+) as cofactor.

Its subcellular location is the plastid. It localises to the chloroplast. It catalyses the reaction RNA(n) + a ribonucleoside 5'-triphosphate = RNA(n+1) + diphosphate. Its function is as follows. DNA-dependent RNA polymerase catalyzes the transcription of DNA into RNA using the four ribonucleoside triphosphates as substrates. This is DNA-directed RNA polymerase subunit beta' from Vitis vinifera (Grape).